A 461-amino-acid polypeptide reads, in one-letter code: ATP synthase subunit beta 2 (461 aa).

151-158 contacts ATP; that stretch reads GGAGVGKT.

This sequence belongs to the ATPase alpha/beta chains family. In terms of assembly, F-type ATPases have 2 components, CF(1) - the catalytic core - and CF(0) - the membrane proton channel. CF(1) has five subunits: alpha(3), beta(3), gamma(1), delta(1), epsilon(1). CF(0) has three main subunits: a(1), b(2) and c(9-12). The alpha and beta chains form an alternating ring which encloses part of the gamma chain. CF(1) is attached to CF(0) by a central stalk formed by the gamma and epsilon chains, while a peripheral stalk is formed by the delta and b chains.

The protein resides in the cell inner membrane. It carries out the reaction ATP + H2O + 4 H(+)(in) = ADP + phosphate + 5 H(+)(out). Produces ATP from ADP in the presence of a proton gradient across the membrane. The catalytic sites are hosted primarily by the beta subunits. The chain is ATP synthase subunit beta 2 from Photobacterium profundum (strain SS9).